The following is a 356-amino-acid chain: sn-glycerol-3-phosphate import ATP-binding protein UgpC (356 aa).

The 232-residue stretch at 4–235 (LKLQAVTKSW…PASLFVASFI (232 aa)) folds into the ABC transporter domain. Residue 37–44 (GPSGCGKS) participates in ATP binding.

It belongs to the ABC transporter superfamily. sn-glycerol-3-phosphate importer (TC 3.A.1.1.3) family. In terms of assembly, the complex is composed of two ATP-binding proteins (UgpC), two transmembrane proteins (UgpA and UgpE) and a solute-binding protein (UgpB).

Its subcellular location is the cell inner membrane. It carries out the reaction sn-glycerol 3-phosphate(out) + ATP + H2O = sn-glycerol 3-phosphate(in) + ADP + phosphate + H(+). In terms of biological role, part of the ABC transporter complex UgpBAEC involved in sn-glycerol-3-phosphate (G3P) import. Responsible for energy coupling to the transport system. The sequence is that of sn-glycerol-3-phosphate import ATP-binding protein UgpC from Escherichia coli O157:H7.